The sequence spans 482 residues: MSLEDSLRSLSLDYLNLLINGQAFSDVVFSVEGRLVHAHRCILAARSLFFRKFFCGPDPPSGLDPSGNRVNPSGSARSGVIPVNSVGYEVFLLMLQFLYSGQVSIVPQKHEPRPNCGDRGCWHTHCTSAVDLALDTLAAARYFGVEQLALLTQKQLASMVEKASIEDVMKVLLASRKQDMHQLWTTCSHLVAKSGLPPEVLAKHLPIDIIAKIEELRIKTSLSRRSLMPHHHHPHHHDHLTAAADLEDQKIRRMRRALDSSDVELVKLMVMGEGLNLDEALALPYAVENCSREVVKALLELGAADVNFPAGPTGKTPLHIAAEMVSPDMVAVLLDHHADPNVRTVDGVTPLDILRTLTSDFLFKGAVPGLTHIEPNKLRLCLELVQSAALVMSREEGNNNNSNNNNNATASSATNMYPHHNMNEDHHHSHNNNNMDSRLVYLNLGANTQMSTSRMDSGDDDNTHREAINNSMYHHHSHGHDY.

The 83-residue stretch at 25 to 107 (SDVVFSVEGR…LYSGQVSIVP (83 aa)) folds into the BTB domain. The C2HC NPR-type zinc finger occupies 113–127 (RPNCGDRGCWHTHCT). The Zn(2+) site is built by C116, C121, H123, and C126. ANK repeat units lie at residues 249–278 (QKIR…LNLD), 279–308 (EALA…DVNF), 313–342 (TGKT…DPNV), and 346–380 (DGVT…KLRL). A disordered region spans residues 395-434 (EEGNNNNSNNNNNATASSATNMYPHHNMNEDHHHSHNNNN). The span at 398-415 (NNNNSNNNNNATASSATN) shows a compositional bias: low complexity.

Belongs to the plant 'ANKYRIN-BTB/POZ' family. 'NOOT-BOP-COCH-like' (NBCL) subfamily. As to quaternary structure, homodimer. In terms of tissue distribution, expressed in the shoot apical meristem (SAM) at the base of the developing leaf where stipules are formed. Associated with functional and vestigial abscission zones (AZs), including pulvini.

It localises to the nucleus. It is found in the cytoplasm. The protein localises to the cell membrane. It functions in the pathway protein modification; protein ubiquitination. May act as a substrate-specific adapter of an E3 ubiquitin-protein ligase complex (CUL3-RBX1-BTB) which mediates the ubiquitination and subsequent proteasomal degradation of target proteins. Transcriptional co-regulator involved in the promotion of leaf and floral meristem fate and determinacy. Promotes normal stipule growth and development. Required for the abscission of senescent organs, probably by regulating the cell wall disorganization in abscission zones (AZs, e.g. pulvini at the base of leaves). Involved in the coordination of the symbiotic nodule developmental program. Promotes the formation of root nodules by interacting directly with APP1 to modulate the expression of the nuclear transcription factor Y subunit (NF-YA1), a key nodulin. Necessary for the robust maintenance of nodule identity throughout the nodule developmental program. Involved in the regulation of indeterminate nodule identity in association with NOOT2. In Medicago truncatula (Barrel medic), this protein is BTB/POZ domain and ankyrin repeat-containing protein NOOT1.